Consider the following 227-residue polypeptide: UPF0173 metal-dependent hydrolase Saci_1512 (227 aa).

It belongs to the UPF0173 family.

The protein is UPF0173 metal-dependent hydrolase Saci_1512 of Sulfolobus acidocaldarius (strain ATCC 33909 / DSM 639 / JCM 8929 / NBRC 15157 / NCIMB 11770).